A 431-amino-acid polypeptide reads, in one-letter code: Dihydroorotase (431 aa).

His-59 and His-61 together coordinate Zn(2+). Substrate-binding positions include 61 to 63 (HLR) and Asn-93. The Zn(2+) site is built by Asp-151, His-178, His-231, and Asp-304. Residue Asp-304 is part of the active site. Substrate contacts are provided by residues His-308 and 322 to 323 (FG).

It belongs to the metallo-dependent hydrolases superfamily. DHOase family. Class I DHOase subfamily. It depends on Zn(2+) as a cofactor.

The catalysed reaction is (S)-dihydroorotate + H2O = N-carbamoyl-L-aspartate + H(+). Its pathway is pyrimidine metabolism; UMP biosynthesis via de novo pathway; (S)-dihydroorotate from bicarbonate: step 3/3. Its function is as follows. Catalyzes the reversible cyclization of carbamoyl aspartate to dihydroorotate. In Caldanaerobacter subterraneus subsp. tengcongensis (strain DSM 15242 / JCM 11007 / NBRC 100824 / MB4) (Thermoanaerobacter tengcongensis), this protein is Dihydroorotase.